The chain runs to 392 residues: Phosphoglycerate kinase (392 aa).

Substrate contacts are provided by residues 21–23 (DLN), R36, 59–62 (HLGR), R114, and R147. ATP-binding positions include K198, E320, and 346–349 (GGDT).

This sequence belongs to the phosphoglycerate kinase family. In terms of assembly, monomer.

Its subcellular location is the cytoplasm. It catalyses the reaction (2R)-3-phosphoglycerate + ATP = (2R)-3-phospho-glyceroyl phosphate + ADP. Its pathway is carbohydrate degradation; glycolysis; pyruvate from D-glyceraldehyde 3-phosphate: step 2/5. The polypeptide is Phosphoglycerate kinase (Nitrosomonas eutropha (strain DSM 101675 / C91 / Nm57)).